The chain runs to 1400 residues: DNA-directed RNA polymerase subunit beta' (1400 aa).

4 residues coordinate Zn(2+): C70, C72, C85, and C88. Mg(2+)-binding residues include D460, D462, and D464. Zn(2+)-binding residues include C814, C888, C895, and C898.

It belongs to the RNA polymerase beta' chain family. The RNAP catalytic core consists of 2 alpha, 1 beta, 1 beta' and 1 omega subunit. When a sigma factor is associated with the core the holoenzyme is formed, which can initiate transcription. The cofactor is Mg(2+). Zn(2+) serves as cofactor.

The enzyme catalyses RNA(n) + a ribonucleoside 5'-triphosphate = RNA(n+1) + diphosphate. Functionally, DNA-dependent RNA polymerase catalyzes the transcription of DNA into RNA using the four ribonucleoside triphosphates as substrates. This Methylococcus capsulatus (strain ATCC 33009 / NCIMB 11132 / Bath) protein is DNA-directed RNA polymerase subunit beta'.